A 145-amino-acid polypeptide reads, in one-letter code: MNQEVGSIMGYLYKLYPVQVYEEEIPQDFAVPSLYFPPASTVDGVDTVSTFQKAYVLNVKLFHENVQKAHNEAERIADTLRSRRGIIPLIQESGEDTGDFIRLSRIETRVSDDYATIVLNWTSRYWYEREDQRSIDGFKFKSGVK.

The protein to B.subtilis XkdJ.

This is an uncharacterized protein from Bacillus subtilis (strain 168).